Consider the following 202-residue polypeptide: Superoxide dismutase [Mn] (202 aa).

Residue His-27 coordinates Mn(2+). Phosphothreonine is present on residues Thr-34 and Thr-70. Positions 82, 164, and 168 each coordinate Mn(2+).

Belongs to the iron/manganese superoxide dismutase family. As to quaternary structure, homodimer. Requires Mn(2+) as cofactor.

It carries out the reaction 2 superoxide + 2 H(+) = H2O2 + O2. In terms of biological role, destroys superoxide anion radicals which are normally produced within the cells and which are toxic to biological systems. The protein is Superoxide dismutase [Mn] (sodA) of Halalkalibacterium halodurans (strain ATCC BAA-125 / DSM 18197 / FERM 7344 / JCM 9153 / C-125) (Bacillus halodurans).